The following is a 158-amino-acid chain: MMKCLLIATGERVPTWVAQGFAEYHKRLSYWLPLELVEIEPSLRGKNHDPQQAIEDEGRRVMAALPKQPYAVTLDVKGKSLNSEQLAKRMEHWRGLGRNLVFLIGGPEGHSQEVLNISNERWSLGPLTLPHMLVRLIVVEQLYRAATILTNHPYHRGK.

Residues Leu-74, Gly-105, and 124 to 129 (LGPLTL) each bind S-adenosyl-L-methionine.

It belongs to the RNA methyltransferase RlmH family. In terms of assembly, homodimer.

It is found in the cytoplasm. The catalysed reaction is pseudouridine(1915) in 23S rRNA + S-adenosyl-L-methionine = N(3)-methylpseudouridine(1915) in 23S rRNA + S-adenosyl-L-homocysteine + H(+). In terms of biological role, specifically methylates the pseudouridine at position 1915 (m3Psi1915) in 23S rRNA. This Xylella fastidiosa (strain 9a5c) protein is Ribosomal RNA large subunit methyltransferase H.